A 462-amino-acid polypeptide reads, in one-letter code: Protein Tube (462 aa).

One can recognise a Death domain in the interval 27–152 (YSRNTELRRV…SAADFVALDF (126 aa)). The tract at residues 218-265 (RDKSVPQPSGNTPPIAPPRRQQRSTTNSNFATLTGTGTTSTTIPNVPN) is disordered. Residues 249 to 259 (TLTGTGTTSTT) are compositionally biased toward low complexity. A run of 2 repeats spans residues 262–269 (NVPNLTIL) and 286–293 (NIPDLSIL). The interval 262–460 (NVPNLTILNP…ACNIPDLSEL (199 aa)) is 5 X approximate repeats. Residues 301–317 (RATVSDNPSNRTSSTDP) are compositionally biased toward polar residues. The disordered stretch occupies residues 301 to 462 (RATVSDNPSN…NIPDLSELQQ (162 aa)). Repeat unit 3 spans residues 319–326 (NIPRITLL). The span at 342–354 (AKASTATTSTASS) shows a compositional bias: low complexity. Residues 355-367 (NNLPMISALNISK) are compositionally biased toward polar residues. The stretch at 356–363 (NLPMISAL) is repeat 4. Basic and acidic residues predominate over residues 368 to 377 (GSRETLRPES). Positions 387-403 (DDDDDNDGEEDGEEEYP) are enriched in acidic residues. Low complexity predominate over residues 409 to 424 (NLSNSEQQSSNNDSSL). Residues 425–438 (TTVTGTSGDNSFEL) show a composition bias toward polar residues. Positions 439–449 (TNDSSSTSNDD) are enriched in low complexity. Residues 453–460 (NIPDLSEL) form repeat 5.

In terms of assembly, interacts (via Death domain) with pll (via Death domain). Phosphorylated by pll.

It localises to the cytoplasm. Its subcellular location is the cell membrane. In terms of biological role, plays an essential role in the Tl receptor signaling pathway that establishes embryonic dorsoventral polarity; the signal directs import of dl into ventral and ventrolateral nuclei, thereby establishing dorsoventral polarity. Tub recruits pll to the plasma membrane and protein-protein interaction activates pll. Also has a role in pupal pattern formation. This chain is Protein Tube (tub), found in Drosophila melanogaster (Fruit fly).